Here is a 340-residue protein sequence, read N- to C-terminus: DNA polymerase III subunit delta' (340 aa).

The DNA polymerase holoenzyme is a complex that contains 10 different types of subunits. These subunits are organized into 3 functionally essential subassemblies: the pol III core, the beta sliding clamp processivity factor and the clamp-loading complex. The pol III core (subunits alpha,epsilon and theta) contains the polymerase and the 3'-5' exonuclease proofreading activities. The polymerase is tethered to the template via the sliding clamp processivity factor. The clamp-loading complex assembles the beta processivity factor onto the primer template and plays a central role in the organization and communication at the replication fork. This complex contains delta, delta', psi and chi, and copies of either or both of two different DnaX proteins, gamma and tau. The composition of the holoenzyme is, therefore: (alpha,epsilon,theta)[2]-(gamma/tau)[3]-delta,delta', psi,chi-beta[4].

The catalysed reaction is DNA(n) + a 2'-deoxyribonucleoside 5'-triphosphate = DNA(n+1) + diphosphate. Its function is as follows. DNA polymerase III is a complex, multichain enzyme responsible for most of the replicative synthesis in bacteria. This DNA polymerase also exhibits 3' to 5' exonuclease activity. This chain is DNA polymerase III subunit delta' (holB), found in Yersinia pestis.